The primary structure comprises 123 residues: UPF0342 protein LAR_1202 (123 aa).

It belongs to the UPF0342 family.

This chain is UPF0342 protein LAR_1202, found in Limosilactobacillus reuteri subsp. reuteri (strain JCM 1112) (Lactobacillus reuteri).